Reading from the N-terminus, the 1464-residue chain is Nuclear pore complex protein NUP155 (1464 aa).

Residue Ser-2 is modified to N-acetylserine.

This sequence belongs to the non-repetitive/WGA-negative nucleoporin family. Part of the nuclear pore complex (NPC). The NPC has an eight-fold symmetrical structure comprising a central transport channel and two rings, the cytoplasmic and nuclear rings, to which eight filaments are attached. The cytoplasmic filaments have loose ends, while the nuclear filaments are joined in a distal ring, forming a nuclear basket. NPCs are highly dynamic in configuration and composition, and can be devided in 3 subcomplexes, the NUP62 subcomplex, the NUP107-160 subcomplex and the NUP93 subcomplex, containing approximately 30 different nucleoporin proteins.

The protein resides in the nucleus. Its subcellular location is the nuclear pore complex. Major component of the nuclear pore complex (NPC). The sequence is that of Nuclear pore complex protein NUP155 from Arabidopsis thaliana (Mouse-ear cress).